The following is a 322-amino-acid chain: MLNVQRGLHTTVRLSARTKYTKPKPKPQARVIKSEPSQVTHHDNNLKIRAPIPPSAKNIVCPEDHPLWQFFADKKFLRDRADLDNHSRPWTIPELRRKSFEDLHSLWYTSLKERNILARENHLLKTAVESSDDSFEKVADKVRTTMWRIRHVLSERDWSYRIANEAFVEEVDSFVQEFEKDFLLLSQDEDEEAFEQLSRFQKSIFGISEFIDENVVNKRFIDGMKLIANLKVKKFSERNNDIKTFLDQTPNNKITDAGEAFLVFTCENTEKDVKEACEAVLELRNNGNAVSRYDELDTVAEYVNRLAQAQSQATQPVSEQSS.

The interval 1-44 (MLNVQRGLHTTVRLSARTKYTKPKPKPQARVIKSEPSQVTHHDN) is disordered.

This sequence belongs to the universal ribosomal protein uL29 family. Component of the mitochondrial large ribosomal subunit. Mature mitochondrial ribosomes consist of a small (37S) and a large (54S) subunit. The 37S subunit contains at least 33 different proteins and 1 molecule of RNA (15S). The 54S subunit contains at least 45 different proteins and 1 molecule of RNA (21S).

Its subcellular location is the mitochondrion. The polypeptide is Large ribosomal subunit protein uL29m (MRPL4) (Vanderwaltozyma polyspora (strain ATCC 22028 / DSM 70294 / BCRC 21397 / CBS 2163 / NBRC 10782 / NRRL Y-8283 / UCD 57-17) (Kluyveromyces polysporus)).